The chain runs to 411 residues: MLDLKNLQNNFDEVAKKLKNKKVDENILKKLAELFASLKKEKTALEEFQAFQNKFSKELATAEDKESLKAKLSENKSKINEQSVKVNALENELEEIAHAIPNIPDECVPVGEDEDENVELKKVLNPPSFDFTPKEHFELGESLNWLDFVRGVKISQSRFCVLKNEGALLSRALVNYMIDFNRSHGFEFVNVPFLVNGATMFGTGQLPKFKEDMYKVDDEDLYLISTSEIPVTNLYSGEILASETLPIKMTCYSACFRKEAGSAGRDTRGIIRQHQFEKVELVSITKPEQSDSVFNEMLECASDLLSSLGLAHRHLMLCTGDLGFSAAKTVDLEVWLPGQNKYREISSVSNCRDFQARRAKIRYKNEQGKNELVHTLNGSSLAVGRTLVAIMENYQDKEGKIHIPDALKKYF.

226-228 lines the L-serine pocket; it reads TSE. 257–259 contacts ATP; that stretch reads RKE. Glu-280 lines the L-serine pocket. ATP is bound at residue 344–347; the sequence is EISS. Ser-379 is a binding site for L-serine.

Belongs to the class-II aminoacyl-tRNA synthetase family. Type-1 seryl-tRNA synthetase subfamily. Homodimer. The tRNA molecule binds across the dimer.

Its subcellular location is the cytoplasm. It carries out the reaction tRNA(Ser) + L-serine + ATP = L-seryl-tRNA(Ser) + AMP + diphosphate + H(+). The enzyme catalyses tRNA(Sec) + L-serine + ATP = L-seryl-tRNA(Sec) + AMP + diphosphate + H(+). The protein operates within aminoacyl-tRNA biosynthesis; selenocysteinyl-tRNA(Sec) biosynthesis; L-seryl-tRNA(Sec) from L-serine and tRNA(Sec): step 1/1. In terms of biological role, catalyzes the attachment of serine to tRNA(Ser). Is also able to aminoacylate tRNA(Sec) with serine, to form the misacylated tRNA L-seryl-tRNA(Sec), which will be further converted into selenocysteinyl-tRNA(Sec). This chain is Serine--tRNA ligase, found in Campylobacter jejuni subsp. jejuni serotype O:6 (strain 81116 / NCTC 11828).